A 341-amino-acid chain; its full sequence is Anthranilate phosphoribosyltransferase (341 aa).

5-phospho-alpha-D-ribose 1-diphosphate contacts are provided by residues Gly79, 82–83 (GD), Thr87, 89–92 (NIST), 107–115 (KHGNRAVSS), and Ser119. Position 79 (Gly79) interacts with anthranilate. Residue Ser91 participates in Mg(2+) binding. Asn110 is a binding site for anthranilate. Arg165 contacts anthranilate. Mg(2+) is bound by residues Asp224 and Glu225.

This sequence belongs to the anthranilate phosphoribosyltransferase family. Homodimer. Mg(2+) is required as a cofactor.

It catalyses the reaction N-(5-phospho-beta-D-ribosyl)anthranilate + diphosphate = 5-phospho-alpha-D-ribose 1-diphosphate + anthranilate. It participates in amino-acid biosynthesis; L-tryptophan biosynthesis; L-tryptophan from chorismate: step 2/5. In terms of biological role, catalyzes the transfer of the phosphoribosyl group of 5-phosphorylribose-1-pyrophosphate (PRPP) to anthranilate to yield N-(5'-phosphoribosyl)-anthranilate (PRA). The chain is Anthranilate phosphoribosyltransferase from Bacillus cereus (strain G9842).